Reading from the N-terminus, the 423-residue chain is Dihydroorotase (423 aa).

2 residues coordinate Zn(2+): H56 and H58. Substrate contacts are provided by residues H58–R60 and N89. K137, H168, H227, and D302 together coordinate Zn(2+). Position 137 is an N6-carboxylysine (K137). The active site involves D302. Substrate is bound at residue H306.

Belongs to the metallo-dependent hydrolases superfamily. DHOase family. Class I DHOase subfamily. Zn(2+) is required as a cofactor.

The enzyme catalyses (S)-dihydroorotate + H2O = N-carbamoyl-L-aspartate + H(+). It participates in pyrimidine metabolism; UMP biosynthesis via de novo pathway; (S)-dihydroorotate from bicarbonate: step 3/3. Its function is as follows. Catalyzes the reversible cyclization of carbamoyl aspartate to dihydroorotate. In Methanocaldococcus jannaschii (strain ATCC 43067 / DSM 2661 / JAL-1 / JCM 10045 / NBRC 100440) (Methanococcus jannaschii), this protein is Dihydroorotase.